Reading from the N-terminus, the 94-residue chain is Large ribosomal subunit protein uL23 (94 aa).

The protein belongs to the universal ribosomal protein uL23 family. Part of the 50S ribosomal subunit. Contacts protein L29, and trigger factor when it is bound to the ribosome.

In terms of biological role, one of the early assembly proteins it binds 23S rRNA. One of the proteins that surrounds the polypeptide exit tunnel on the outside of the ribosome. Forms the main docking site for trigger factor binding to the ribosome. This is Large ribosomal subunit protein uL23 from Treponema pallidum (strain Nichols).